A 100-amino-acid chain; its full sequence is Large ribosomal subunit protein uL23 (100 aa).

Belongs to the universal ribosomal protein uL23 family. As to quaternary structure, part of the 50S ribosomal subunit. Contacts protein L29, and trigger factor when it is bound to the ribosome.

Functionally, one of the early assembly proteins it binds 23S rRNA. One of the proteins that surrounds the polypeptide exit tunnel on the outside of the ribosome. Forms the main docking site for trigger factor binding to the ribosome. This Shewanella piezotolerans (strain WP3 / JCM 13877) protein is Large ribosomal subunit protein uL23.